The following is a 389-amino-acid chain: 26S proteasome non-ATPase regulatory subunit 6 (389 aa).

In terms of domain architecture, PCI spans 193–361 (DFKQAAELFL…EIVETNRPDS (169 aa)).

It belongs to the proteasome subunit S10 family. Component of the 19S proteasome regulatory particle complex. The 26S proteasome consists of a 20S core particle (CP) and two 19S regulatory subunits (RP). The regulatory particle is made of a lid composed of 9 subunits including PSMD6, a base containing 6 ATPases and few additional components.

Component of the 26S proteasome, a multiprotein complex involved in the ATP-dependent degradation of ubiquitinated proteins. This complex plays a key role in the maintenance of protein homeostasis by removing misfolded or damaged proteins, which could impair cellular functions, and by removing proteins whose functions are no longer required. Therefore, the proteasome participates in numerous cellular processes, including cell cycle progression, apoptosis, or DNA damage repair. This chain is 26S proteasome non-ATPase regulatory subunit 6 (PSMD6), found in Homo sapiens (Human).